We begin with the raw amino-acid sequence, 487 residues long: MKYKDLRDFLAQLERQGELKRVAVEIDPHLEMTEICDRLLKAGGPAVLFEKSRGHDIPVLGNLFGTPKRVAMGMGQDSVEALREVGKLLAYLKEPDPPKGLKDAWEKLPVLKQVLNMAPKELSRASCQEIVWEGKDVDLGKLPIQTCWPGDAGPLITWGLTVTKGPHKTRQNLGIYRQQVIAPNKVIMRWLAHRGGALDFRDFTLANPGQPYPIAVALGADPATILGAVTPVPDSLSEYQFAGLLRGAKTEIVKCLTHDLQVPASAEIVLEGYIHPDETAVEGPFGDHTGYYNEQETFPVFTIERITMRRDPIYHSTYTGKPPDEPAILGVALNEVFVPLLQKQFTEIVDFYLPPEGCSYRMAVVSMKKQYAGHAKRIMFGVWSFLRQFMYTKFIIVTDDDVNIRDWKEVIWAITTRVDPARDTLIVENTPIDYLDFASPVSGLGGKMGLDATNKWPGETSREWGKPITMDEVVKARVDGMWTDLDL.

Mn(2+) is bound at residue Asn-172. Prenylated FMN-binding positions include 175 to 177, 189 to 191, and 194 to 195; these read IYR, RWL, and RG. Residue Glu-238 participates in Mn(2+) binding. Catalysis depends on Asp-287, which acts as the Proton donor.

It belongs to the UbiD family. Homohexamer. Requires prenylated FMN as cofactor. Mn(2+) is required as a cofactor.

The protein localises to the cell membrane. It carries out the reaction a 4-hydroxy-3-(all-trans-polyprenyl)benzoate + H(+) = a 2-(all-trans-polyprenyl)phenol + CO2. The protein operates within cofactor biosynthesis; ubiquinone biosynthesis. Functionally, catalyzes the decarboxylation of 3-octaprenyl-4-hydroxy benzoate to 2-octaprenylphenol, an intermediate step in ubiquinone biosynthesis. The polypeptide is 3-octaprenyl-4-hydroxybenzoate carboxy-lyase (Nitrosospira multiformis (strain ATCC 25196 / NCIMB 11849 / C 71)).